The primary structure comprises 185 residues: Early nodulin-like protein 17 (185 aa).

The signal sequence occupies residues 1 to 21 (MARRDQLVSFLCFFLIVSAVA). The region spanning 37–137 (KQYVVGGRSG…GQRLMINVDS (101 aa)) is the Phytocyanin domain. N-linked (GlcNAc...) asparagine glycans are attached at residues asparagine 79 and asparagine 94. Cysteine 93 and cysteine 125 are disulfide-bonded. The interval 136–155 (DSAPSPSPSPSPAPQEAATA) is disordered. The GPI-anchor amidated serine moiety is linked to residue serine 156. A propeptide spans 157–185 (AATSSSAATAAHALLLAAMAMMGLILGEW) (removed in mature form).

This sequence belongs to the early nodulin-like (ENODL) family. As to expression, expressed ubiquitously. Accumulates mainly in anthers, stigmas and ovaries.

It localises to the cell membrane. Functionally, may act as a carbohydrate transporter. Required for male fertility and seed yield. The sequence is that of Early nodulin-like protein 17 from Oryza sativa subsp. japonica (Rice).